The chain runs to 445 residues: Chromosome partition protein MukF (445 aa).

A leucine-zipper region spans residues 213-241 (LSETSATLRELQDTLQAAGDELQTQILDI).

The protein belongs to the MukF family. Interacts, and probably forms a ternary complex, with MukE and MukB via its C-terminal region. The complex formation is stimulated by calcium or magnesium. It is required for an interaction between MukE and MukB.

It localises to the cytoplasm. The protein resides in the nucleoid. Functionally, involved in chromosome condensation, segregation and cell cycle progression. May participate in facilitating chromosome segregation by condensation DNA from both sides of a centrally located replisome during cell division. Not required for mini-F plasmid partitioning. Probably acts via its interaction with MukB and MukE. Overexpression results in anucleate cells. It has a calcium binding activity. The polypeptide is Chromosome partition protein MukF (Vibrio cholerae serotype O1 (strain ATCC 39315 / El Tor Inaba N16961)).